Consider the following 230-residue polypeptide: Ribonuclease 3 (230 aa).

The RNase III domain occupies 5–127 (HEHLARKLGI…ILGAVLRDQG (123 aa)). Glutamate 40 lines the Mg(2+) pocket. The active site involves aspartate 44. The Mg(2+) site is built by aspartate 113 and glutamate 116. Residue glutamate 116 is part of the active site. Residues 154–224 (DPKTRLQELM…AENMLSRLSD (71 aa)) form the DRBM domain. Positions 202-230 (GEGSSRKKAEQQAAENMLSRLSDQSRFRV) are disordered.

The protein belongs to the ribonuclease III family. Homodimer. The cofactor is Mg(2+).

It is found in the cytoplasm. It catalyses the reaction Endonucleolytic cleavage to 5'-phosphomonoester.. Functionally, digests double-stranded RNA. Involved in the processing of primary rRNA transcript to yield the immediate precursors to the large and small rRNAs (23S and 16S). Processes some mRNAs, and tRNAs when they are encoded in the rRNA operon. Processes pre-crRNA and tracrRNA of type II CRISPR loci if present in the organism. This is Ribonuclease 3 from Methylococcus capsulatus (strain ATCC 33009 / NCIMB 11132 / Bath).